The following is an 817-amino-acid chain: MTIKIRFPKDVREYARKEKVKESIIKLTETSLAEAITNFHRRMIILQGDTLEKAKLAGILAGGVARILSEYIPEFLDRKLRDEDKIEVLYATDALGEDTYGRKRFEEFRKHFSVLAPNAELTSVTFKYSRDILGRTFDILVLDLSYDYSPNDLGRIIETVRGGGLIFILTNPFEKWKDMWTGFHKSLVTPPYTIDDVKKRFNRRLIRKFTEHKGIYIVDADKKKIERRPRKNKSQAKLPEREKVEIPRDIKFPRELYELCLTRGQVEVLKALEDLIENPGMVVLTADRGRGKSVSVGIASIGLAITSKKKNFRIVVTAPELENVQSLLKFAERSLKVLGYKTKTVKESGLIKEVYAKGIGIRYYPPTKGYRQKADLYIVDEAAGIHVPILHRYLEKERVVFSSTIHGYEGAGRGFSVKFLKKAKEKREYKEIHLSVPIRYAEGDPIERWLFDVLLLDAEPVELTEEDYELIRKMEVYLEEPDLDDWFENDREDLRHFVGIYVLAHYRNRPSDVALLADAPHHEARVLRLKNGKIVTAIQIAKEGGIPKAVIDKMAKGYKPPGNIIPDMMVKHHYAKEFAKLRGYRIVRIATHPDAMDLGLGSKALELLVKEAQEKGLDWVGSGFGASEELIRFWVRNGFAVVHLSPTRNPVSGEYTAIVIKPISERAKEIVKKANDEFRLRLTEWLGDTHRDLEPEIARWLFETPFGEAVNYPIHLTKVQRKRLEMFIKRVLTYDTVVDAVKPLVKLYFLDGWMRPYLDDRQIALLIHRVLQAHDWKETAKLLNRTELYTMIELRDIVRGLWYYYKHMLKDEEKDIS.

ATP is bound by residues Gln265, Gly289–Ile298, and Arg439. Residues Glu469 to Ser664 form the N-acetyltransferase domain. Acetyl-CoA-binding positions include Ile589–Thr591, Met596–Ser602, Glu629, and Arg636.

Belongs to the RNA cytidine acetyltransferase family. TmcA subfamily.

The protein localises to the cytoplasm. The catalysed reaction is cytidine(34) in elongator tRNA(Met) + acetyl-CoA + ATP + H2O = N(4)-acetylcytidine(34) in elongator tRNA(Met) + ADP + phosphate + CoA + H(+). It carries out the reaction a cytidine in RNA + acetyl-CoA + ATP + H2O = an N(4)-acetylcytidine in RNA + ADP + phosphate + CoA + H(+). It catalyses the reaction a cytidine in tRNA + acetyl-CoA + ATP + H2O = an N(4)-acetylcytidine in tRNA + ADP + phosphate + CoA + H(+). The enzyme catalyses a cytidine in mRNA + acetyl-CoA + ATP + H2O = an N(4)-acetylcytidine in mRNA + ADP + phosphate + CoA + H(+). In terms of biological role, catalyzes the formation of N(4)-acetylcytidine (ac(4)C) at the wobble position of tRNA(Met), by using acetyl-CoA as an acetyl donor and ATP (or GTP). Functionally, catalyzes the formation of N(4)-acetylcytidine (ac(4)C) sites in rRNA, tRNA, mRNA and non-coding (nc) RNA, almost always on the middle C of a CCG motif. In hyperthermophiles more acetylation is seen at higher temperatures. The protein is tRNA(Met) cytidine acetyltransferase TmcA of Pyrococcus abyssi (strain GE5 / Orsay).